Reading from the N-terminus, the 361-residue chain is UDP-3-O-acylglucosamine N-acyltransferase (361 aa).

Histidine 253 acts as the Proton acceptor in catalysis.

Belongs to the transferase hexapeptide repeat family. LpxD subfamily. Homotrimer.

The catalysed reaction is a UDP-3-O-[(3R)-3-hydroxyacyl]-alpha-D-glucosamine + a (3R)-hydroxyacyl-[ACP] = a UDP-2-N,3-O-bis[(3R)-3-hydroxyacyl]-alpha-D-glucosamine + holo-[ACP] + H(+). It participates in bacterial outer membrane biogenesis; LPS lipid A biosynthesis. Functionally, catalyzes the N-acylation of UDP-3-O-acylglucosamine using 3-hydroxyacyl-ACP as the acyl donor. Is involved in the biosynthesis of lipid A, a phosphorylated glycolipid that anchors the lipopolysaccharide to the outer membrane of the cell. In Burkholderia mallei (strain ATCC 23344), this protein is UDP-3-O-acylglucosamine N-acyltransferase.